The primary structure comprises 199 residues: Recombination protein RecR (199 aa).

A C4-type zinc finger spans residues 57-72; the sequence is CEKCNNFTEEVVCELC. The region spanning 80 to 175 is the Toprim domain; the sequence is ALLCVVEMPA…KITRIARGLP (96 aa).

This sequence belongs to the RecR family.

In terms of biological role, may play a role in DNA repair. It seems to be involved in an RecBC-independent recombinational process of DNA repair. It may act with RecF and RecO. The chain is Recombination protein RecR from Nitrosospira multiformis (strain ATCC 25196 / NCIMB 11849 / C 71).